We begin with the raw amino-acid sequence, 488 residues long: E3 ubiquitin-protein ligase XIAP (488 aa).

3 BIR repeats span residues 40–105, 176–241, and 266–329; these read RLAS…KFIN, RLQT…YFVL, and RLET…QFLI. Zn(2+) contacts are provided by Cys-298, Cys-301, His-318, and Cys-325. The RING-type zinc finger occupies 441 to 476; that stretch reads CKVCMDRRITIVFIPCGHLVACAVCADVLDKCPICC.

The protein belongs to the IAP family. As to quaternary structure, monomer, and homodimer. Degraded in a 2-step mechanism; a caspase-independent first step and a caspase-dependent second step. Stabilized indirectly by MAPK, which acts to delay caspase activation, rather than directly phosphorylating xiap.

Its subcellular location is the cytoplasm. It localises to the nucleus. The enzyme catalyses S-ubiquitinyl-[E2 ubiquitin-conjugating enzyme]-L-cysteine + [acceptor protein]-L-lysine = [E2 ubiquitin-conjugating enzyme]-L-cysteine + N(6)-ubiquitinyl-[acceptor protein]-L-lysine.. Multi-functional protein which regulates not only caspases and apoptosis, but also acts as an E3 ubiquitin-protein ligase mediating ubiquitination and subsequent proteasomal degradation of its target proteins. Acts as a direct caspase inhibitor. E3 ubiquitin-protein ligase that acts as an important regulator of innate immunity by mediating 'Lys-63'-linked polyubiquitination of ripk2 downstream of NOD1 and NOD2, thereby transforming ripk2 into a scaffolding protein for downstream effectors, ultimately leading to activation of the NF-kappa-B and MAP kinases signaling. A key apoptotic suppressor in eggs. Acts as a positive regulator of Wnt signaling. This chain is E3 ubiquitin-protein ligase XIAP (xiap), found in Xenopus laevis (African clawed frog).